A 359-amino-acid chain; its full sequence is Histidinol-phosphate aminotransferase (359 aa).

An N6-(pyridoxal phosphate)lysine modification is found at Lys217.

It belongs to the class-II pyridoxal-phosphate-dependent aminotransferase family. Histidinol-phosphate aminotransferase subfamily. Homodimer. Pyridoxal 5'-phosphate serves as cofactor.

It carries out the reaction L-histidinol phosphate + 2-oxoglutarate = 3-(imidazol-4-yl)-2-oxopropyl phosphate + L-glutamate. Its pathway is amino-acid biosynthesis; L-histidine biosynthesis; L-histidine from 5-phospho-alpha-D-ribose 1-diphosphate: step 7/9. The polypeptide is Histidinol-phosphate aminotransferase (Salmonella paratyphi A (strain ATCC 9150 / SARB42)).